A 174-amino-acid polypeptide reads, in one-letter code: RNA pyrophosphohydrolase (174 aa).

The Nudix hydrolase domain maps to 6–149 (GFRANVGIII…KRDVYRKVMK (144 aa)). Residues 38–59 (GGVDDGETAEEAMYRELYEEVG) carry the Nudix box motif.

The protein belongs to the Nudix hydrolase family. RppH subfamily. A divalent metal cation is required as a cofactor.

Its function is as follows. Accelerates the degradation of transcripts by removing pyrophosphate from the 5'-end of triphosphorylated RNA, leading to a more labile monophosphorylated state that can stimulate subsequent ribonuclease cleavage. This is RNA pyrophosphohydrolase from Shewanella sp. (strain MR-7).